A 429-amino-acid chain; its full sequence is Autophagy-related protein 18 (429 aa).

WD repeat units lie at residues 1 to 36 (MAMNFVTFNQDYSYLAVATSKGFRIFTTDPFAKSYE), 69 to 114 (KRQS…LLYT), 139 to 182 (PLPQ…AINV), 185 to 225 (AHRS…KLYQ), 230 to 269 (SMPSRIFSMSFNTTSTLLCVSSSTETIHLFKLSHPTSSPD), 309 to 355 (KHNG…AWFK), and 367 to 407 (VNNG…GGEG). A L/FRRG motif motif is present at residues 226–230 (FRRGS). Over residues 262–275 (SHPTSSPDASPSSP) the composition is skewed to low complexity. Positions 262–308 (SHPTSSPDASPSSPVGRDRSLSQSSSGYSPDRGDLTGDVGSSDFPAR) are disordered.

This sequence belongs to the WD repeat PROPPIN family. In terms of assembly, component of the PI(3,5)P2 regulatory complex.

The protein resides in the preautophagosomal structure membrane. The protein localises to the vacuole membrane. It localises to the endosome membrane. In terms of biological role, the PI(3,5)P2 regulatory complex regulates both the synthesis and turnover of phosphatidylinositol 3,5-bisphosphate (PtdIns(3,5)P2). Necessary for proper vacuole morphology. Plays an important role in osmotically-induced vacuole fragmentation. Required for cytoplasm to vacuole transport (Cvt) vesicle formation, pexophagy and starvation-induced autophagy. Involved in correct atg9 trafficking to the pre-autophagosomal structure. Might also be involved in premeiotic DNA replication. The polypeptide is Autophagy-related protein 18 (atg18) (Neosartorya fischeri (strain ATCC 1020 / DSM 3700 / CBS 544.65 / FGSC A1164 / JCM 1740 / NRRL 181 / WB 181) (Aspergillus fischerianus)).